Here is a 422-residue protein sequence, read N- to C-terminus: WD repeat and SOCS box-containing protein 1 (422 aa).

WD repeat units lie at residues 124–165 (SRCV…LLLN), 168–208 (DHTE…NMMK), 212–251 (GHQN…MIRK), 254–293 (GHYN…ILFE), and 309–346 (DNGR…SYPV). Residues 374-422 (NAYFWSTPKYVSSLQHLCRMAIRRVMNTNEVKKLPIPQKIMEFLTYQTM) form the SOCS box domain.

As to quaternary structure, component of a probable ECS E3 ubiquitin-protein ligase complex that contains the Elongin BC complex.

Its pathway is protein modification; protein ubiquitination. In terms of biological role, probable substrate-recognition component of a SCF-like ECS (Elongin-Cullin-SOCS-box protein) E3 ubiquitin-protein ligase complex which mediates the ubiquitination and subsequent proteasomal degradation of target proteins. The protein is WD repeat and SOCS box-containing protein 1 (wsb1) of Xenopus tropicalis (Western clawed frog).